A 450-amino-acid chain; its full sequence is Phosphoglucosamine mutase (450 aa).

Residue serine 101 is the Phosphoserine intermediate of the active site. Residues serine 101, aspartate 240, aspartate 242, and aspartate 244 each coordinate Mg(2+). Serine 101 is modified (phosphoserine).

The protein belongs to the phosphohexose mutase family. The cofactor is Mg(2+). Post-translationally, activated by phosphorylation.

It catalyses the reaction alpha-D-glucosamine 1-phosphate = D-glucosamine 6-phosphate. Functionally, catalyzes the conversion of glucosamine-6-phosphate to glucosamine-1-phosphate. In Streptococcus pneumoniae (strain JJA), this protein is Phosphoglucosamine mutase.